Here is an 855-residue protein sequence, read N- to C-terminus: MVKTVANGKKKPQKVVKKQQKTQKKHNQQKLQKRNTPTLKQKLKKESKIVKINELAWKPVEIPDNFGDFGGFYGLEEIDGVDVEMVDGKPQFVVKGEEGEKSVSNENTTTNELEDGDDIEVDEGEEIAQQEQENSDNDELIEEDAEEVEEQQQHGEKELEEEEFTGFGDDIAKEEKDSDGAKKKLNSSEDIDELKYNAFANLDLPLPNDDEIDLPEWGEDKIETCLSPYILNGLSNMKFTTPTPIQKRTIPLALEGKDVIGKATTGSGKTLAYGIPILEKYIQSLDTVKRKVREKVVNHPTGIIFAPTRELAHQVVDHLNKIAQYSPLSTKGIVSVTGGLSIQKQERLLSFGPGIIVATPGRMLELCQNDQELVKRLSMTDIIVLDEADRLLQDGHFEEFEKILELFNKNRPKNDKSIEWKWQTLVFSATFSRDLFGKLDKQQKQKSVKGNGKALNKADSGNSLVQNDEIIELLREKLRFKDKAPSLVDANPKEIVSGQITEALVECGPLERDLYLYYFLLMYKGSTLVFANSIDSVKRLVPLLNNLNIPAFAIHSSMIQKQRLRSLERFKDASEKNQTAVLVASDVAARGLDIPNIDHVAHYHLPRSADVYIHRSGRTARAGKEGVSVMFCSPQEASGPLRKLRKLVASNAANNKNQKINVHSDVKLLPVEMDLVSQLRPRVELAGRLADSNISSTATRKENSWVKQAAEELGVEDLHDLDEFEDDIIKKQRKRQESKRLDKNEQKRLRFELRELLANPIRKNNRRSYLTSGLQNLAHLMVQGTHHEDVLGHEKVKALKDLQKNGSKIKPVKGDDKMKRIAKVNQRKQAKKDAKKDAKQKRQELRHGHSNKSEE.

Disordered stretches follow at residues 1 to 43 (MVKT…KQKL) and 95 to 167 (KGEE…FTGF). Residues 8-33 (GKKKPQKVVKKQQKTQKKHNQQKLQK) show a composition bias toward basic residues. Acidic residues predominate over residues 112–150 (ELEDGDDIEVDEGEEIAQQEQENSDNDELIEEDAEEVEE). The Q motif signature appears at 219-247 (EDKIETCLSPYILNGLSNMKFTTPTPIQK). The 200-residue stretch at 250–449 (IPLALEGKDV…DKQQKQKSVK (200 aa)) folds into the Helicase ATP-binding domain. 263–270 (ATTGSGKT) is a binding site for ATP. A DEAD box motif is present at residues 386–389 (DEAD). Positions 515-668 (YLYYFLLMYK…KINVHSDVKL (154 aa)) constitute a Helicase C-terminal domain. A disordered region spans residues 801–855 (DLQKNGSKIKPVKGDDKMKRIAKVNQRKQAKKDAKKDAKQKRQELRHGHSNKSEE). A compositionally biased stretch (basic residues) spans 820 to 830 (RIAKVNQRKQA). The span at 831–855 (KKDAKKDAKQKRQELRHGHSNKSEE) shows a compositional bias: basic and acidic residues.

It belongs to the DEAD box helicase family. DDX24/MAK5 subfamily.

Its subcellular location is the nucleus. It is found in the nucleolus. The enzyme catalyses ATP + H2O = ADP + phosphate + H(+). Functionally, ATP-binding RNA helicase involved in the biogenesis of 60S ribosomal subunits and is required for the normal formation of 25S and 5.8S rRNAs. This Lodderomyces elongisporus (strain ATCC 11503 / CBS 2605 / JCM 1781 / NBRC 1676 / NRRL YB-4239) (Yeast) protein is ATP-dependent RNA helicase MAK5 (MAK5).